A 197-amino-acid chain; its full sequence is MSNNEIVFVTGNANKLKEVQSILTQEVDNNNKTIHLINEALDLEELQDTDLNAIALAKGKQAVAALGKGKPVFVEDTALRFDEFNGLPGAYIKWFLKSMGLEKIVKMLEPFENKNAEAVTTICFADSRGEYHFFQGITRGKIVPSRGPTTFGWDSIFEPFDSHGLTYAEMSKDAKNAISHRGKAFAQFKEYLYQNDF.

Position 10 to 15 (10 to 15 (TGNANK)) interacts with ITP. Mg(2+) is bound at residue E45. ITP contacts are provided by residues K58, 76–77 (DT), K93, 151–154 (FGWD), K175, and 180–181 (HR).

It belongs to the HAM1 NTPase family. In terms of assembly, homodimer. It depends on Mg(2+) as a cofactor. The cofactor is Mn(2+).

Its subcellular location is the cytoplasm. It is found in the nucleus. The enzyme catalyses ITP + H2O = IMP + diphosphate + H(+). It carries out the reaction dITP + H2O = dIMP + diphosphate + H(+). It catalyses the reaction XTP + H2O = XMP + diphosphate + H(+). The catalysed reaction is N(6)-hydroxy-dATP + H2O = N(6)-hydroxy-dAMP + diphosphate + H(+). Pyrophosphatase that hydrolyzes the non-canonical purine nucleotides inosine triphosphate (ITP), deoxyinosine triphosphate (dITP) as well as 2'-deoxy-N-6-hydroxylaminopurine triphosphate (dHAPTP) and 5-bromodeoxyuridine 5'-triphosphate (BrdUTP) to their respective monophosphate derivatives. Xanthosine 5'-triphosphate (XTP) is also a potential substrate. The enzyme does not distinguish between the deoxy- and ribose forms. Probably excludes non-canonical purines from RNA and DNA precursor pools, thus preventing their incorporation into RNA and DNA and avoiding chromosomal lesions. The chain is Inosine triphosphate pyrophosphatase from Saccharomyces cerevisiae (strain ATCC 204508 / S288c) (Baker's yeast).